Reading from the N-terminus, the 552-residue chain is Dihydroxy-acid dehydratase (552 aa).

Asp-78 contacts Mg(2+). Cys-119 serves as a coordination point for [2Fe-2S] cluster. The Mg(2+) site is built by Asp-120 and Lys-121. At Lys-121 the chain carries N6-carboxylysine. Cys-190 is a binding site for [2Fe-2S] cluster. Glu-441 lines the Mg(2+) pocket. The active-site Proton acceptor is the Ser-467.

Belongs to the IlvD/Edd family. Homodimer. Requires [2Fe-2S] cluster as cofactor. It depends on Mg(2+) as a cofactor.

The catalysed reaction is (2R)-2,3-dihydroxy-3-methylbutanoate = 3-methyl-2-oxobutanoate + H2O. The enzyme catalyses (2R,3R)-2,3-dihydroxy-3-methylpentanoate = (S)-3-methyl-2-oxopentanoate + H2O. Its pathway is amino-acid biosynthesis; L-isoleucine biosynthesis; L-isoleucine from 2-oxobutanoate: step 3/4. It functions in the pathway amino-acid biosynthesis; L-valine biosynthesis; L-valine from pyruvate: step 3/4. Functionally, functions in the biosynthesis of branched-chain amino acids. Catalyzes the dehydration of (2R,3R)-2,3-dihydroxy-3-methylpentanoate (2,3-dihydroxy-3-methylvalerate) into 2-oxo-3-methylpentanoate (2-oxo-3-methylvalerate) and of (2R)-2,3-dihydroxy-3-methylbutanoate (2,3-dihydroxyisovalerate) into 2-oxo-3-methylbutanoate (2-oxoisovalerate), the penultimate precursor to L-isoleucine and L-valine, respectively. The polypeptide is Dihydroxy-acid dehydratase (Ignicoccus hospitalis (strain KIN4/I / DSM 18386 / JCM 14125)).